The chain runs to 188 residues: Holliday junction branch migration complex subunit RuvA (188 aa).

Residues 1–64 (MIAGISGRVL…QDGITLYGFS (64 aa)) form a domain I region. A domain II region spans residues 65 to 143 (NEMKKELFLS…SAGIKDMRIY (79 aa)). Position 143 (Tyr143) is a region of interest, flexible linker. The segment at 143 to 186 (YHESLEALVSLGYPEKQAREAVKQVYREGMKTSELIKEALKFLS) is domain III.

The protein belongs to the RuvA family. Homotetramer. Forms an RuvA(8)-RuvB(12)-Holliday junction (HJ) complex. HJ DNA is sandwiched between 2 RuvA tetramers; dsDNA enters through RuvA and exits via RuvB. An RuvB hexamer assembles on each DNA strand where it exits the tetramer. Each RuvB hexamer is contacted by two RuvA subunits (via domain III) on 2 adjacent RuvB subunits; this complex drives branch migration. In the full resolvosome a probable DNA-RuvA(4)-RuvB(12)-RuvC(2) complex forms which resolves the HJ.

It localises to the cytoplasm. Functionally, the RuvA-RuvB-RuvC complex processes Holliday junction (HJ) DNA during genetic recombination and DNA repair, while the RuvA-RuvB complex plays an important role in the rescue of blocked DNA replication forks via replication fork reversal (RFR). RuvA specifically binds to HJ cruciform DNA, conferring on it an open structure. The RuvB hexamer acts as an ATP-dependent pump, pulling dsDNA into and through the RuvAB complex. HJ branch migration allows RuvC to scan DNA until it finds its consensus sequence, where it cleaves and resolves the cruciform DNA. Promotes Holliday junction (HJ) branch migration in conjunction with RuvB. In Thermotoga maritima (strain ATCC 43589 / DSM 3109 / JCM 10099 / NBRC 100826 / MSB8), this protein is Holliday junction branch migration complex subunit RuvA.